We begin with the raw amino-acid sequence, 297 residues long: Protease HtpX homolog (297 aa).

2 helical membrane passes run Val14–Leu34 and Tyr39–Phe59. His143 contacts Zn(2+). Glu144 is a catalytic residue. Residue His147 coordinates Zn(2+). The next 2 helical transmembrane spans lie at Ile158–Trp178 and Gly193–Ala213. Residue Glu225 coordinates Zn(2+).

This sequence belongs to the peptidase M48B family. It depends on Zn(2+) as a cofactor.

It is found in the cell membrane. The protein is Protease HtpX homolog of Streptococcus equi subsp. equi (strain 4047).